The chain runs to 33 residues: U1-pseudomyrmecitoxin-Pt1 subunit LS2 (33 aa).

It belongs to the myrmexin family. In terms of assembly, heterodimer composed of subunit LS2 and subunit SS1, heterodimer composed of subunit LS2 and SS2, and heterodimer composed of subunit LS2 and SS3; disulfide-linked. As to expression, expressed by the venom gland.

It localises to the secreted. Functionally, this heterodimer may have anti-inflammatory properties, since the myrmexin complex (composed of 6 SS-LS heterodimers) inhibits carrageenin-induced edema in a dose-dependent manner (after subcutaneous injection into rats). The sequence is that of U1-pseudomyrmecitoxin-Pt1 subunit LS2 from Pseudomyrmex triplarinus (Ant).